The chain runs to 139 residues: FAD synthase (139 aa).

Residues 8 to 9, 13 to 16, Asp92, and Tyr119 contribute to the ATP site; these read VF and HPGH.

It belongs to the archaeal FAD synthase family. Homodimer. A divalent metal cation serves as cofactor.

The catalysed reaction is FMN + ATP + H(+) = FAD + diphosphate. Its pathway is cofactor biosynthesis; FAD biosynthesis; FAD from FMN: step 1/1. Catalyzes the transfer of the AMP portion of ATP to flavin mononucleotide (FMN) to produce flavin adenine dinucleotide (FAD) coenzyme. This Picrophilus torridus (strain ATCC 700027 / DSM 9790 / JCM 10055 / NBRC 100828 / KAW 2/3) protein is FAD synthase.